The primary structure comprises 170 residues: TFIIB-type zinc finger protein (170 aa).

The segment at 1-30 (MECPVCGSNEIVWDNKNGEVVCSNCGIIID) adopts a TFIIB-type zinc-finger fold. Zn(2+) contacts are provided by C3, C6, C22, and C25.

This sequence belongs to the TFIIB family. Zn(2+) is required as a cofactor.

In Saccharolobus shibatae (strain ATCC 51178 / DSM 5389 / JCM 8931 / NBRC 15437 / B12) (Sulfolobus shibatae), this protein is TFIIB-type zinc finger protein.